Here is a 627-residue protein sequence, read N- to C-terminus: uncharacterized protein (627 aa).

A WH1 domain is found at 21–136; the sequence is GISASDKILS…NSVCKRQTRS (116 aa). The segment at 310–347 is disordered; the sequence is RGSLSTPRIPTHRDSYRSATKPDTVPKQTPPPTHNSYV.

This is an uncharacterized protein from Caenorhabditis elegans.